A 321-amino-acid chain; its full sequence is Phospholipid phosphatase-related protein type 5 (321 aa).

The next 6 helical transmembrane spans lie at 10–30 (SSMLYFQMVIMAGTVMLAYYF), 62–82 (AVPPVLLYSLAAGVPVLVIIV), 122–142 (FLGIYTFGLFATDIFVNAGQV), 196–213 (AALSVYAAMYLTMYITNT), 225–245 (VLCLGLMCLAFLTGLNRVAEY), and 252–272 (VIAGFLVGISIAVFLVVCVVN).

The protein belongs to the PA-phosphatase related phosphoesterase family. Isoform 1 is expressed in brain, lung, kidney and colon. Isoform 2 is expressed in placenta, skeletal muscle and kidney.

Its subcellular location is the cell membrane. Functionally, induces filopodia formation and promotes neurite growth in a CDC42-independent manner; impedes neurite growth inhibitory-mediated axonal retraction. This chain is Phospholipid phosphatase-related protein type 5, found in Homo sapiens (Human).